We begin with the raw amino-acid sequence, 355 residues long: Tryptophan--tRNA ligase (355 aa).

ATP contacts are provided by residues 13–15 (QPT) and 21–22 (GN). A 'HIGH' region motif is present at residues 14 to 22 (PTGNLHLGN). Asp-137 lines the L-tryptophan pocket. Residues 149–151 (GED), Ile-208, and 217–221 (KMSKS) contribute to the ATP site. The 'KMSKS' region signature appears at 217-221 (KMSKS).

Belongs to the class-I aminoacyl-tRNA synthetase family. Homodimer.

Its subcellular location is the cytoplasm. The enzyme catalyses tRNA(Trp) + L-tryptophan + ATP = L-tryptophyl-tRNA(Trp) + AMP + diphosphate + H(+). Functionally, catalyzes the attachment of tryptophan to tRNA(Trp). This chain is Tryptophan--tRNA ligase, found in Mesorhizobium japonicum (strain LMG 29417 / CECT 9101 / MAFF 303099) (Mesorhizobium loti (strain MAFF 303099)).